The sequence spans 77 residues: Large ribosomal subunit protein bL28 (77 aa).

Residues 1–26 (MARVCKVTGKRPMSGNNVSHANNKTK) are disordered.

This sequence belongs to the bacterial ribosomal protein bL28 family.

The chain is Large ribosomal subunit protein bL28 from Neisseria gonorrhoeae (strain ATCC 700825 / FA 1090).